A 206-amino-acid chain; its full sequence is Ribosomal RNA large subunit methyltransferase E (206 aa).

S-adenosyl-L-methionine is bound by residues G60, W62, D80, D96, and D121. K161 functions as the Proton acceptor in the catalytic mechanism.

The protein belongs to the class I-like SAM-binding methyltransferase superfamily. RNA methyltransferase RlmE family.

Its subcellular location is the cytoplasm. The enzyme catalyses uridine(2552) in 23S rRNA + S-adenosyl-L-methionine = 2'-O-methyluridine(2552) in 23S rRNA + S-adenosyl-L-homocysteine + H(+). In terms of biological role, specifically methylates the uridine in position 2552 of 23S rRNA at the 2'-O position of the ribose in the fully assembled 50S ribosomal subunit. In Nitrosospira multiformis (strain ATCC 25196 / NCIMB 11849 / C 71), this protein is Ribosomal RNA large subunit methyltransferase E.